The chain runs to 213 residues: MDQEFWQKKWASNVIGFHLPDTNPVLSEFWKALNPTREQTVFVPLCGKSMDLDWLAERHNSVSGVELSQIAVRAFFAERLYTPTVTTLSSTLELYDFDEFTIFAGDYFTAPIEATDLIYDRAALVALPKEMRSEYVQVLRSRLKEGGRILLVTLDYDQNEMSGPPFSVPEDEVRSLFSGMSITKLQRDEADADHPRIKKGLTRFAEEVWLIKS.

Residues Trp-10, Leu-45, Glu-66, and Arg-121 each coordinate S-adenosyl-L-methionine.

Belongs to the class I-like SAM-binding methyltransferase superfamily. TPMT family.

It localises to the cytoplasm. The enzyme catalyses S-adenosyl-L-methionine + a thiopurine = S-adenosyl-L-homocysteine + a thiopurine S-methylether.. This chain is Thiopurine S-methyltransferase, found in Aliivibrio salmonicida (strain LFI1238) (Vibrio salmonicida (strain LFI1238)).